The chain runs to 606 residues: Serine/threonine-protein kinase A-Raf (606 aa).

Residues 19 to 91 (GTVKVYLPNK…DGEELIVEVL (73 aa)) enclose the RBD domain. Residues 98–144 (MHNFVRKTFFSLAFCDFCLKFLFHGFRCQTCGYKFHQHCSSKVPTVC) form a Phorbol-ester/DAG-type zinc finger. Zn(2+) is bound by residues His-99, Cys-112, Cys-115, Cys-125, Cys-128, His-133, Cys-136, and Cys-144. 2 positions are modified to phosphoserine: Ser-157 and Ser-162. Disordered stretches follow at residues 158-207 (VQDL…NAPL) and 241-290 (TDAA…DKKK). Thr-181 is modified (phosphothreonine). Phosphoserine occurs at positions 186, 257, and 269. The span at 254–267 (PRGSPSPASVSSGR) shows a compositional bias: low complexity. Residues 274-289 (SPSEQRERKSLADDKK) show a composition bias toward basic and acidic residues. The region spanning 310 to 570 (VQLLKRIGTG…PQILATIELL (261 aa)) is the Protein kinase domain. Residues 316–324 (IGTGSFGTV) and Lys-336 each bind ATP. Thr-318 carries the phosphothreonine modification. Residue Asp-429 is the Proton acceptor of the active site.

It belongs to the protein kinase superfamily. TKL Ser/Thr protein kinase family. RAF subfamily. As to quaternary structure, interacts with TH1L/NELFD. Zn(2+) is required as a cofactor. In terms of processing, dephosphorylation by the SHOC2-MRAS-PP1c (SMP) complex consisting of SHOC2, GTP-bound M-Ras/MRAS and the catalytic subunit of protein phosphatase 1 (PPP1CA, PPP1CB or PPP1CC); this relieves inactivation and stimulates kinase activity.

It carries out the reaction L-seryl-[protein] + ATP = O-phospho-L-seryl-[protein] + ADP + H(+). It catalyses the reaction L-threonyl-[protein] + ATP = O-phospho-L-threonyl-[protein] + ADP + H(+). Involved in the transduction of mitogenic signals from the cell membrane to the nucleus. May also regulate the TOR signaling cascade. Phosphorylates PFKFB2. The polypeptide is Serine/threonine-protein kinase A-Raf (ARAF) (Sus scrofa (Pig)).